A 160-amino-acid chain; its full sequence is Putative control protein C.MjaVP (160 aa).

May be involved in control of expression of the type II restriction enzyme MjaV and/or its methyltransferase M.MjaV. The chain is Putative control protein C.MjaVP from Methanocaldococcus jannaschii (strain ATCC 43067 / DSM 2661 / JAL-1 / JCM 10045 / NBRC 100440) (Methanococcus jannaschii).